Consider the following 872-residue polypeptide: MKELSSAQIRQMWLDFWKSKGHCVEPSANLVPVNDPTLLWINSGVATLKKYFDGSVIPENPRITNAQKSIRTNDIENVGKTARHHTMFEMLGNFSIGDYFRDEAIEWGFELLTSPDWFDFPKDKLYMTYYPDDKDSYNRWIACGVEPSHLVPIEDNFWEIGAGPSGPDTEIFFDRGEDFDPENIGLRLLAEDIENDRYIEIWNIVLSQFNADPAVPRSEYKELPNKNIDTGAGLERLAAVMQGAKTNFETDLFMPIIREVEKLSGKTYNPDGDNMSFKVIADHIRALSFAIGDGALPGNEGRGYVLRRLLRRAVMHGRRLGINETFLYKLVPTVGQIMESYYPEVLEKRDFIEKIVKREEETFARTIDAGSGHLDSLLAQLKAEGKDTLEGKDIFKLYDTYGFPVELTEELAEDAGYKIDHEGFKSAMKEQQDRARAAVVKGGSMGMQNETLAGIVEESRFEYDTYSLESSLSVIIADNERTEAVSEGQALLVFAQTPFYAEMGGQVADTGRIKNDKGDTVAEVVDVQKAPNGQPLHTVNVLASLSVGTNYTLEINKERRLAVEKNHTATHLLHAALHNVIGEHATQAGSLNEEEFLRFDFTHFEAVSNEELRHIEQEVNEQIWNALTITTTETDVETAKEMGAMALFGEKYGKVVRVVQIGNYSVELCGGTHLNNSSEIGLFKIVKEEGIGSGTRRIIAVTGRQAFEAYRNQEDALKEIAATVKAPQLKDAAAKVQALSDSLRDLQKENAELKEKAAAAAAGDVFKDVQEAKGVRFIASQVDVADAGALRTFADNWKQKDYSDVLVLVAAIGEKVNVLVASKTKDVHAGNMIKELAPIVAGRGGGKPDMAMAGGSDASKIAELLAAVAETV.

Residues His567, His571, Cys669, and His673 each coordinate Zn(2+).

This sequence belongs to the class-II aminoacyl-tRNA synthetase family. It depends on Zn(2+) as a cofactor.

The protein localises to the cytoplasm. The catalysed reaction is tRNA(Ala) + L-alanine + ATP = L-alanyl-tRNA(Ala) + AMP + diphosphate. In terms of biological role, catalyzes the attachment of alanine to tRNA(Ala) in a two-step reaction: alanine is first activated by ATP to form Ala-AMP and then transferred to the acceptor end of tRNA(Ala). Also edits incorrectly charged Ser-tRNA(Ala) and Gly-tRNA(Ala) via its editing domain. The protein is Alanine--tRNA ligase of Streptococcus pyogenes serotype M28 (strain MGAS6180).